Reading from the N-terminus, the 319-residue chain is Mitochondrial fission regulator 1-like (319 aa).

The disordered stretch occupies residues 1 to 35 (MASLGAGAEPESVLFGKDGTEACESPEGRRSGRRK).

Belongs to the MTFR1 family.

It localises to the mitochondrion outer membrane. In terms of biological role, mitochondrial protein required for adaptation of miochondrial dynamics to metabolic changes. Regulates mitochondrial morphology at steady state and mediates AMPK-dependent stress-induced mitochondrial fragmentation via the control of OPA1 levels. This Xenopus tropicalis (Western clawed frog) protein is Mitochondrial fission regulator 1-like (mtfr1l).